The chain runs to 147 residues: UPF0306 protein YhbP (147 aa).

The protein belongs to the UPF0306 family.

The sequence is that of UPF0306 protein YhbP from Shigella boydii serotype 4 (strain Sb227).